We begin with the raw amino-acid sequence, 545 residues long: 2-succinyl-5-enolpyruvyl-6-hydroxy-3-cyclohexene-1-carboxylate synthase (545 aa).

The disordered stretch occupies residues 184–209; it reads PLVPDPEPHGAPTPAGRPGGRPWTYT. Residues 195 to 205 show a composition bias toward low complexity; the sequence is PTPAGRPGGRP.

This sequence belongs to the TPP enzyme family. MenD subfamily. As to quaternary structure, homodimer. It depends on Mg(2+) as a cofactor. Mn(2+) serves as cofactor. Requires thiamine diphosphate as cofactor.

The enzyme catalyses isochorismate + 2-oxoglutarate + H(+) = 5-enolpyruvoyl-6-hydroxy-2-succinyl-cyclohex-3-ene-1-carboxylate + CO2. The protein operates within quinol/quinone metabolism; 1,4-dihydroxy-2-naphthoate biosynthesis; 1,4-dihydroxy-2-naphthoate from chorismate: step 2/7. Its pathway is quinol/quinone metabolism; menaquinone biosynthesis. Its function is as follows. Catalyzes the thiamine diphosphate-dependent decarboxylation of 2-oxoglutarate and the subsequent addition of the resulting succinic semialdehyde-thiamine pyrophosphate anion to isochorismate to yield 2-succinyl-5-enolpyruvyl-6-hydroxy-3-cyclohexene-1-carboxylate (SEPHCHC). This Mycobacterium avium (strain 104) protein is 2-succinyl-5-enolpyruvyl-6-hydroxy-3-cyclohexene-1-carboxylate synthase.